Reading from the N-terminus, the 915-residue chain is Transferrin-binding protein A (915 aa).

The first 24 residues, 1–24, serve as a signal peptide directing secretion; sequence MQQQHLFRLNILCLSLMTALPAYA. The TonB box signature appears at 38–45; the sequence is DTIQVKAK. The region spanning 51–176 is the TBDR plug domain; the sequence is RDNEVTGLGK…LAGSVAFQTK (126 aa). A TBDR beta-barrel domain is found at 187 to 915; the sequence is QWGIQSKTAY…NYTFSLEMKF (729 aa). Residues 526–540 are compositionally biased toward polar residues; the sequence is LKTPPQNNGKKTSPN. The disordered stretch occupies residues 526–545; that stretch reads LKTPPQNNGKKTSPNGREKN. The TonB C-terminal box signature appears at 898–915; that stretch reads NRYAAPGRNYTFSLEMKF.

Belongs to the TonB-dependent receptor family. Binds both human apo- and holo-transferrin (TF), via the TF C-terminus. Forms a large complex with TF and TbpB.

It localises to the cell outer membrane. Neisseria acquires iron by extracting it from serum transferrin (TF) in its human host. Acts as a TF receptor and is required for TF utilization. Binds both apo- and holo-TF, via the TF C-terminus. In Neisseria gonorrhoeae, this protein is Transferrin-binding protein A.